The chain runs to 228 residues: Large ribosomal subunit protein bL25 (228 aa).

Residues 196–228 (EEAAVAEAQSAESAEGKAEAEAEATNEKNKSEA) form a disordered region. The segment covering 209-228 (AEGKAEAEAEATNEKNKSEA) has biased composition (basic and acidic residues).

The protein belongs to the bacterial ribosomal protein bL25 family. CTC subfamily. Part of the 50S ribosomal subunit; part of the 5S rRNA/L5/L18/L25 subcomplex. Contacts the 5S rRNA. Binds to the 5S rRNA independently of L5 and L18.

Its function is as follows. This is one of the proteins that binds to the 5S RNA in the ribosome where it forms part of the central protuberance. This is Large ribosomal subunit protein bL25 from Methylorubrum extorquens (strain CM4 / NCIMB 13688) (Methylobacterium extorquens).